The primary structure comprises 280 residues: Transmembrane protein 119 (280 aa).

Positions 1–20 are cleaved as a signal peptide; that stretch reads MVPWFLLSLLLLARPVPGVA. Topologically, residues 21-91 are extracellular; it reads YSVSLPASFL…IMDFFRQYVM (71 aa). Serine 36 carries O-linked (Xyl...) (chondroitin sulfate) serine glycosylation. Residues 38-47 show a composition bias toward low complexity; sequence EAEGSSASSP. The interval 38 to 73 is disordered; that stretch reads EAEGSSASSPSLPPPGTPAFSPTPERPQPTALDGPV. Residues 92–112 form a helical membrane-spanning segment; that stretch reads LIAVVGSLTFLIMFIVCAALI. The Cytoplasmic segment spans residues 113 to 280; it reads TRQKHKATAY…CACNRVSPSV (168 aa). Disordered stretches follow at residues 133–162 and 181–280; these read VDQR…EGLD and PARA…SPSV. Positions 148–162 are enriched in basic and acidic residues; the sequence is VPDRAPDSRHEEGLD. Phosphoserine is present on serine 269.

Interacts with SMAD1, SMAD5 and RUNX2. As to expression, expressed in spermatocytes and spermatids in the developing testis (at protein level). Expressed in the brain, heart, lung, spleen, skeletal muscle, ovary, testis and epididymis. Predominantly expressed in osteoblasts.

Its subcellular location is the cell membrane. The protein resides in the cytoplasm. It is found in the endoplasmic reticulum membrane. It localises to the secreted. Plays an important role in bone formation and normal bone mineralization. Promotes the differentiation of myoblasts into osteoblasts. May induce the commitment and differentiation of myoblasts into osteoblasts through an enhancement of BMP2 production and interaction with the BMP-RUNX2 pathway. Up-regulates the expression of ATF4 which plays a central role in osteoblast differentiation. Essential for normal spermatogenesis and late testicular differentiation. The polypeptide is Transmembrane protein 119 (Tmem119) (Mus musculus (Mouse)).